We begin with the raw amino-acid sequence, 479 residues long: Bifunctional protein HldE (479 aa).

Residues 1–322 are ribokinase; the sequence is MIDDFRFGRI…RELLQEMPET (322 aa). 198-201 is a binding site for ATP; sequence NRIE. Aspartate 267 is an active-site residue. The interval 347–479 is cytidylyltransferase; that stretch reads FTNGCFDLVH…LVRGMQSAPS (133 aa).

In the N-terminal section; belongs to the carbohydrate kinase PfkB family. This sequence in the C-terminal section; belongs to the cytidylyltransferase family. In terms of assembly, homodimer.

It carries out the reaction D-glycero-beta-D-manno-heptose 7-phosphate + ATP = D-glycero-beta-D-manno-heptose 1,7-bisphosphate + ADP + H(+). It catalyses the reaction D-glycero-beta-D-manno-heptose 1-phosphate + ATP + H(+) = ADP-D-glycero-beta-D-manno-heptose + diphosphate. It functions in the pathway nucleotide-sugar biosynthesis; ADP-L-glycero-beta-D-manno-heptose biosynthesis; ADP-L-glycero-beta-D-manno-heptose from D-glycero-beta-D-manno-heptose 7-phosphate: step 1/4. Its pathway is nucleotide-sugar biosynthesis; ADP-L-glycero-beta-D-manno-heptose biosynthesis; ADP-L-glycero-beta-D-manno-heptose from D-glycero-beta-D-manno-heptose 7-phosphate: step 3/4. Functionally, catalyzes the phosphorylation of D-glycero-D-manno-heptose 7-phosphate at the C-1 position to selectively form D-glycero-beta-D-manno-heptose-1,7-bisphosphate. Its function is as follows. Catalyzes the ADP transfer from ATP to D-glycero-beta-D-manno-heptose 1-phosphate, yielding ADP-D-glycero-beta-D-manno-heptose. This Gluconobacter oxydans (strain 621H) (Gluconobacter suboxydans) protein is Bifunctional protein HldE.